The sequence spans 428 residues: tRNA dimethylallyltransferase (428 aa).

21 to 28 (GTTGVGKS) contributes to the ATP binding site. A dimethylallyl diphosphate-binding site is contributed by 23-28 (TGVGKS). 2 interaction with substrate tRNA regions span residues 46–49 (DSMQ) and 170–174 (RRVQR). Residues 199–207 (FDTLFLWLY) are core aggregation region. The tract at residues 210 to 232 (PEPLFQRLDDRVDDMLERGALQE) is interaction with isopentenylpyrophosphate transferase. 2 interaction with substrate tRNA regions span residues 256 to 258 (QVI) and 284 to 302 (RMKT…WIKK). Residues 373–409 (YTCNVCRNADGKNVVAIGEKYWKIHLGSRRHKSNLKR) form a Matrin-type zinc finger. Residues Cys375, Cys378, His397, and His403 each coordinate Zn(2+).

The protein belongs to the IPP transferase family.

Its subcellular location is the cytoplasm. It localises to the mitochondrion. It is found in the nucleus. It catalyses the reaction adenosine(37) in tRNA + dimethylallyl diphosphate = N(6)-dimethylallyladenosine(37) in tRNA + diphosphate. Functionally, catalyzes the transfer of a dimethylallyl group onto the adenine at position 37 in the anticodon loop on a specific subset of tRNAs both in the cytosol and the mitochondrion, leading to the formation of N6-(dimethylallyl)adenosine (i(6)A). This modification optimizes the codon:anticodon fit in the ribosome and promotes translational fidelity. Competes with the farnesyl pyrophosphate synthase ERG20 for the common substrate dimethylallyl diphosphate (DMAPP). This chain is tRNA dimethylallyltransferase (MOD5), found in Saccharomyces cerevisiae (strain ATCC 204508 / S288c) (Baker's yeast).